The chain runs to 267 residues: Tryptophan synthase alpha chain (267 aa).

Active-site proton acceptor residues include Glu-49 and Asp-60.

This sequence belongs to the TrpA family. In terms of assembly, tetramer of two alpha and two beta chains.

The enzyme catalyses (1S,2R)-1-C-(indol-3-yl)glycerol 3-phosphate + L-serine = D-glyceraldehyde 3-phosphate + L-tryptophan + H2O. It participates in amino-acid biosynthesis; L-tryptophan biosynthesis; L-tryptophan from chorismate: step 5/5. In terms of biological role, the alpha subunit is responsible for the aldol cleavage of indoleglycerol phosphate to indole and glyceraldehyde 3-phosphate. The chain is Tryptophan synthase alpha chain from Rippkaea orientalis (strain PCC 8801 / RF-1) (Cyanothece sp. (strain PCC 8801)).